The following is a 65-amino-acid chain: Large ribosomal subunit protein uL29 (65 aa).

It belongs to the universal ribosomal protein uL29 family.

This chain is Large ribosomal subunit protein uL29, found in Psychrobacter arcticus (strain DSM 17307 / VKM B-2377 / 273-4).